The following is a 471-amino-acid chain: Glutamate--tRNA ligase (471 aa).

The 'HIGH' region signature appears at 9–19; it reads PSPTGYLHVGG. Residues C98, C100, C125, and H127 each coordinate Zn(2+). A 'KMSKS' region motif is present at residues 237 to 241; the sequence is KLSKR. K240 contacts ATP.

It belongs to the class-I aminoacyl-tRNA synthetase family. Glutamate--tRNA ligase type 1 subfamily. As to quaternary structure, monomer. Requires Zn(2+) as cofactor.

The protein resides in the cytoplasm. The catalysed reaction is tRNA(Glu) + L-glutamate + ATP = L-glutamyl-tRNA(Glu) + AMP + diphosphate. In terms of biological role, catalyzes the attachment of glutamate to tRNA(Glu) in a two-step reaction: glutamate is first activated by ATP to form Glu-AMP and then transferred to the acceptor end of tRNA(Glu). The sequence is that of Glutamate--tRNA ligase from Salmonella choleraesuis (strain SC-B67).